The primary structure comprises 86 residues: Muscarinic toxin 38 (86 aa).

The first 21 residues, 1 to 21 (MKTLLLTLVVVTIVCLDLGYT), serve as a signal peptide directing secretion. Disulfide bonds link C24–C45, C38–C63, C67–C78, and C79–C84.

Belongs to the three-finger toxin family. Short-chain subfamily. Aminergic toxin sub-subfamily. In terms of assembly, monomer. Expressed by the venom gland.

It is found in the secreted. In terms of biological role, binds to the muscarinic acetylcholine receptor (CHRM). This chain is Muscarinic toxin 38, found in Ophiophagus hannah (King cobra).